Reading from the N-terminus, the 425-residue chain is Alpha-muurolene synthase (425 aa).

Residues aspartate 97, aspartate 101, asparagine 240, serine 244, and glutamate 248 each contribute to the Mg(2+) site. The DDXXD motif motif lies at 97-101 (DNISD). Residues 348-382 (VAPPPPPPPPTPPPQSSDADTKKQKVKAQDGKGPV) form a disordered region. Pro residues predominate over residues 349-362 (APPPPPPPPTPPPQ). Residues 366–377 (ADTKKQKVKAQD) are compositionally biased toward basic and acidic residues.

This sequence belongs to the terpene synthase family. Mg(2+) serves as cofactor.

The enzyme catalyses (2E,6E)-farnesyl diphosphate = alpha-muurolene + diphosphate. It catalyses the reaction (2E,6E)-farnesyl diphosphate = gamma-muurolene + diphosphate. It carries out the reaction (2E,6E)-farnesyl diphosphate = (+)-(R)-germacrene A + diphosphate. In terms of biological role, sesquiterpene synthase that catalyzes the formation of alpha-muurolene, and at lower level (+)-(R)-germacrene A and gamma-muurolene. The sequence is that of Alpha-muurolene synthase (COP3) from Coprinopsis cinerea (strain Okayama-7 / 130 / ATCC MYA-4618 / FGSC 9003) (Inky cap fungus).